Here is a 161-residue protein sequence, read N- to C-terminus: MPSFDVVSEANMIEVKNAIEQSNKEISTRFDFKGSDARVEQKERELTLFADDDFKLGQVKDVLIGKLAKRNVDVRFLDYGKVEKIGGDKVKQVVTVKKGVTGDLAKKIVRLVKDSKIKVQASIQGDAVRISGTKRDDLQSTIAMLRKDVTDTPLDFNNFRD.

The protein belongs to the YajQ family.

Its function is as follows. Nucleotide-binding protein. This Burkholderia orbicola (strain MC0-3) protein is Nucleotide-binding protein Bcenmc03_2579.